Here is a 292-residue protein sequence, read N- to C-terminus: MIMMSPLYALTKQCVIDTAYRLAVPTQHCAIYTVACRILFLSVGFMTIVKLCGFKMDTSSFIASIEKDNLMDCLISLVEMRDRLRLCNDFPILNYGVNILELLIGKRLNKINNLKNCYVIRELITINISKEWVGKQALKVGLHCFLNLSQADSRHVKYLLSDKESLNKMNFSRYYVPKVVTDLYLDLIGVLYVNTGYNIDLVEKFIFDKLEFLVYDGEEGFKSPQVEYNDICTVNNLKPIIKYNRWHTDGSIVIECGDVIGKGINKTKKKFAINDAKAEFVKNFKAKNKNNE.

A helical transmembrane segment spans residues 29-46 (CAIYTVACRILFLSVGFM). The RNA-binding stretch occupies residues 219–292 (EGFKSPQVEY…NFKAKNKNNE (74 aa)).

It is found in the host endoplasmic reticulum membrane. Acts as a ssRNA-binding protein that may be involved in targeting RNA2 to replication sites or facilitating RNA2 replication. This is RNA-binding P34 protein from Lettuce infectious yellows virus (isolate United States/92) (LIYV).